A 921-amino-acid chain; its full sequence is Collagen alpha-1(IX) chain (921 aa).

The N-terminal stretch at 1-23 (MKNFWKISVFFCVCSCLGPWVSA) is a signal peptide. The nonhelical region (NC4) stretch occupies residues 24–268 (TLKRRARFPA…ITTSQTTDER (245 aa)). Intrachain disulfides connect Cys44–Cys242 and Cys198–Cys252. The Laminin G-like domain occupies 50-244 (GQDDLPGFDL…LQWMLIHCDP (195 aa)). Zn(2+) is bound by residues Asp213, Asp215, and His253. Disordered stretches follow at residues 253–759 (HELP…APTD) and 783–921 (RPDT…GPDK). Collagen-like domains follow at residues 269-325 (GPPG…PGAD), 326-356 (GLTG…GFPG), 358-403 (GIPG…GTIG), 416-472 (PPGR…GLRG), 473-512 (ITGI…PPGE), 604-656 (GKPG…LPGP), 657-711 (PGLP…PGEP), and 712-755 (GLRG…PPGR). The triple-helical region (COL3) stretch occupies residues 269 to 405 (GPPGEQGPPG…PGPSGTIGFH (137 aa)). Pro residues-rich tracts occupy residues 273 to 285 (EQGP…PPGV) and 298 to 310 (KGPP…PGDP). Over residues 368 to 383 (TTGLPGELGRVGPIGD) the composition is skewed to low complexity. Residues 387–398 (RGPPGPPGPPGP) show a composition bias toward pro residues. The segment at 406–417 (DGDPLCPNSCPP) is nonhelical region (NC3). The tract at residues 418 to 756 (GRSGYPGLPG…PGIQGPPGRA (339 aa)) is triple-helical region (COL2). Positions 479–489 (DKGEKGARGFD) are enriched in basic and acidic residues. Composition is skewed to low complexity over residues 594-632 (PGKP…PVGP) and 639-650 (PGKLGSVGSPGL). The interval 757–786 (PTDQHIKQVCMRVVQEHFVEMAASLKRPDT) is nonhelical region (NC2). Positions 787–901 (GASGLPGRPG…PGPPGPPGFC (115 aa)) are triple-helical region (COL1). The Collagen-like 9 domain occupies 790–847 (GLPGRPGPPGPPGPPGENGFPGQMGIRGLPGIKGPPGALGLRGPKGDLGEKGERGPPG). Over residues 794 to 804 (RPGPPGPPGPP) the composition is skewed to pro residues. A compositionally biased stretch (basic and acidic residues) spans 833–845 (PKGDLGEKGERGP). A compositionally biased stretch (pro residues) spans 888-900 (VPGPPGPPGPPGF). Positions 902–921 (EPASCTLQSGQRAFSKGPDK) are nonhelical region (NC1).

Belongs to the fibril-associated collagens with interrupted helices (FACIT) family. As to quaternary structure, heterotrimer of an alpha 1(IX), an alpha 2(IX) and an alpha 3(IX) chain. Covalently linked to the telopeptides of type II collagen by lysine-derived cross-links. In terms of processing, prolines at the third position of the tripeptide repeating unit (G-X-Y) are hydroxylated in some or all of the chains.

The protein localises to the secreted. The protein resides in the extracellular space. It is found in the extracellular matrix. Structural component of hyaline cartilage and vitreous of the eye. This is Collagen alpha-1(IX) chain (Col9a1) from Mus musculus (Mouse).